A 149-amino-acid polypeptide reads, in one-letter code: D-aminoacyl-tRNA deacylase (149 aa).

The Gly-cisPro motif, important for rejection of L-amino acids motif lies at 137–138 (GP).

Belongs to the DTD family. As to quaternary structure, homodimer.

It localises to the cytoplasm. The catalysed reaction is glycyl-tRNA(Ala) + H2O = tRNA(Ala) + glycine + H(+). It catalyses the reaction a D-aminoacyl-tRNA + H2O = a tRNA + a D-alpha-amino acid + H(+). Its function is as follows. An aminoacyl-tRNA editing enzyme that deacylates mischarged D-aminoacyl-tRNAs. Also deacylates mischarged glycyl-tRNA(Ala), protecting cells against glycine mischarging by AlaRS. Acts via tRNA-based rather than protein-based catalysis; rejects L-amino acids rather than detecting D-amino acids in the active site. By recycling D-aminoacyl-tRNA to D-amino acids and free tRNA molecules, this enzyme counteracts the toxicity associated with the formation of D-aminoacyl-tRNA entities in vivo and helps enforce protein L-homochirality. This Clostridium botulinum (strain Kyoto / Type A2) protein is D-aminoacyl-tRNA deacylase.